A 269-amino-acid polypeptide reads, in one-letter code: Proline-rich protein 7 (269 aa).

Over 1 to 9 (MVMSQGTYT) the chain is Extracellular. Residues 1 to 44 (MVMSQGTYTFLTCFAGFWLIWGLIVLLCCFCSFLRRRLKRRQEE) form a required for interaction with NMDA receptors region. The tract at residues 2–39 (VMSQGTYTFLTCFAGFWLIWGLIVLLCCFCSFLRRRLK) is required for membrane localization. A helical; Signal-anchor for type III membrane protein transmembrane segment spans residues 10 to 30 (FLTCFAGFWLIWGLIVLLCCF). Topologically, residues 31–269 (CSFLRRRLKR…IPLFGRTTAV (239 aa)) are cytoplasmic. At serine 64 the chain carries Phosphoserine. Disordered regions lie at residues 64 to 83 (SLAG…RSRL) and 98 to 128 (LLHH…LSVP). The span at 108 to 117 (AHPHPHHHAL) shows a compositional bias: basic residues. Pro residues predominate over residues 118-128 (PHPPPSHLSVP). Positions 146–166 (PCYEEAVLMAEPPPPYSEVLT) are required for internalization. A required for apoptosis induction region spans residues 146–269 (PCYEEAVLMA…IPLFGRTTAV (124 aa)). The PDZ-binding signature appears at 267–269 (TAV).

As to quaternary structure, forms a complex with NMDA receptor zeta subunit GRIN1 and epsilon subunit GRIN2B. Interacts with GRIN2B. Interacts with GRIN1; the interaction is reduced upon NMDA receptor activity. Found in a postsynaptic membrane complex with DLG4 and GRIN1. Interacts with DLG4 (via PDZ3 domain and to lesser degree via PDZ2 domain). Interacts with FBXW7. Found in a complex with JUN and FBXW7. Interacts with JUN and FBXW7; the interaction inhibits ubiquitination-mediated JUN degradation promoting its phosphorylation and transcriptional activity. Interacts with SRC. In terms of processing, palmitoylated. Tyrosine phosphorylated, possibly by SRC. In terms of tissue distribution, expressed in brain. Expressed in the cerebral cortex and especially in hippocampal neural cells (at protein level).

The protein localises to the cell membrane. It localises to the postsynaptic cell membrane. The protein resides in the postsynaptic density membrane. It is found in the cytoplasm. Its subcellular location is the perinuclear region. The protein localises to the synapse. It localises to the cell projection. The protein resides in the dendrite. It is found in the nucleus. Its function is as follows. Acts as a synapse-to-nucleus messenger to promote NMDA receptor-mediated excitotoxicity in neurons in a JUN-dependent manner. Inhibits ubiquitination-mediated degradation and promotes phosphorylation and transcriptional activity of transcription factor JUN. Might play a redundant role in the regulation of T cell receptor signaling. Might promote apoptosis in T cells. In Rattus norvegicus (Rat), this protein is Proline-rich protein 7 (Prr7).